The chain runs to 289 residues: uncharacterized protein (289 aa).

This is an uncharacterized protein from Archaeoglobus fulgidus (strain ATCC 49558 / DSM 4304 / JCM 9628 / NBRC 100126 / VC-16).